Reading from the N-terminus, the 235-residue chain is MLRGAPGLGLTARKGAEDSAEDLGGPCPEPGGDSGVLGANGASCSRGEAEEPAGRRRARPVRSKARRMAANVRERKRILDYNEAFNALRRALRHDLGGKRLSKIATLRRAIHRIAALSLVLRASPAPRGPCGHLECHGPAARGDTGDTGASPPPPAGPSLARPDAARPSVPSAPRCASCPPHAPLARPSAVAEGPGLAQASGGSWRRCPGASSAGPPPWPRGYLRSAPGMGHPRS.

Disordered regions lie at residues M1–A69 and G132–S235. The segment covering R55–R67 has biased composition (basic residues). A bHLH domain is found at A65–L117.

As to quaternary structure, heterodimer. Efficient DNA binding requires dimerization with another bHLH protein. Interacts with TCF3, TCF4, and TCF12.

Its subcellular location is the nucleus. It is found in the cytoplasm. Transcription factor, which play a role in limb development. Is an essential player in the regulatory network governing transcription of genes implicated in limb morphogenesis. The sequence is that of Class A basic helix-loop-helix protein 9 (BHLHA9) from Homo sapiens (Human).